Reading from the N-terminus, the 495-residue chain is ATP synthase subunit beta, chloroplastic (495 aa).

172-179 lines the ATP pocket; sequence GGAGVGKT.

It belongs to the ATPase alpha/beta chains family. F-type ATPases have 2 components, CF(1) - the catalytic core - and CF(0) - the membrane proton channel. CF(1) has five subunits: alpha(3), beta(3), gamma(1), delta(1), epsilon(1). CF(0) has four main subunits: a(1), b(1), b'(1) and c(9-12).

It is found in the plastid. Its subcellular location is the chloroplast thylakoid membrane. The catalysed reaction is ATP + H2O + 4 H(+)(in) = ADP + phosphate + 5 H(+)(out). Produces ATP from ADP in the presence of a proton gradient across the membrane. The catalytic sites are hosted primarily by the beta subunits. The protein is ATP synthase subunit beta, chloroplastic of Pseudogaltonia clavata (Cape hyacinth).